The chain runs to 380 residues: UDP-3-O-acylglucosamine N-acyltransferase (380 aa).

H263 functions as the Proton acceptor in the catalytic mechanism.

The protein belongs to the transferase hexapeptide repeat family. LpxD subfamily. As to quaternary structure, homotrimer.

The catalysed reaction is a UDP-3-O-[(3R)-3-hydroxyacyl]-alpha-D-glucosamine + a (3R)-hydroxyacyl-[ACP] = a UDP-2-N,3-O-bis[(3R)-3-hydroxyacyl]-alpha-D-glucosamine + holo-[ACP] + H(+). It functions in the pathway bacterial outer membrane biogenesis; LPS lipid A biosynthesis. Its function is as follows. Catalyzes the N-acylation of UDP-3-O-acylglucosamine using 3-hydroxyacyl-ACP as the acyl donor. Is involved in the biosynthesis of lipid A, a phosphorylated glycolipid that anchors the lipopolysaccharide to the outer membrane of the cell. The protein is UDP-3-O-acylglucosamine N-acyltransferase of Rhodopirellula baltica (strain DSM 10527 / NCIMB 13988 / SH1).